The following is a 301-amino-acid chain: GTPase Era (301 aa).

The Era-type G domain occupies 4-173 (KAGFVALIGK…LECISKYLSP (170 aa)). Residues 12 to 19 (GKPNAGKS) are G1. 12–19 (GKPNAGKS) serves as a coordination point for GTP. The segment at 38 to 42 (NATRK) is G2. The segment at 64–67 (DTPG) is G3. GTP contacts are provided by residues 64-68 (DTPGL) and 122-125 (SKID). A G4 region spans residues 122–125 (SKID). A G5 region spans residues 152-154 (LSA). The KH type-2 domain maps to 204–280 (LSDEIPYESD…FLNLQVIAQK (77 aa)).

This sequence belongs to the TRAFAC class TrmE-Era-EngA-EngB-Septin-like GTPase superfamily. Era GTPase family. As to quaternary structure, monomer.

The protein resides in the cytoplasm. The protein localises to the cell inner membrane. In terms of biological role, an essential GTPase that binds both GDP and GTP, with rapid nucleotide exchange. Plays a role in 16S rRNA processing and 30S ribosomal subunit biogenesis and possibly also in cell cycle regulation and energy metabolism. The sequence is that of GTPase Era from Helicobacter pylori (strain G27).